Here is a 212-residue protein sequence, read N- to C-terminus: ATP phosphoribosyltransferase (212 aa).

It belongs to the ATP phosphoribosyltransferase family. Short subfamily. As to quaternary structure, heteromultimer composed of HisG and HisZ subunits.

It localises to the cytoplasm. The enzyme catalyses 1-(5-phospho-beta-D-ribosyl)-ATP + diphosphate = 5-phospho-alpha-D-ribose 1-diphosphate + ATP. Its pathway is amino-acid biosynthesis; L-histidine biosynthesis; L-histidine from 5-phospho-alpha-D-ribose 1-diphosphate: step 1/9. Its function is as follows. Catalyzes the condensation of ATP and 5-phosphoribose 1-diphosphate to form N'-(5'-phosphoribosyl)-ATP (PR-ATP). Has a crucial role in the pathway because the rate of histidine biosynthesis seems to be controlled primarily by regulation of HisG enzymatic activity. This Clostridium botulinum (strain Langeland / NCTC 10281 / Type F) protein is ATP phosphoribosyltransferase.